A 525-amino-acid chain; its full sequence is Delta(24)-sterol reductase homolog dhcr-24 (525 aa).

Transmembrane regions (helical) follow at residues Trp-27 to Phe-47 and Ser-214 to Ile-234. The 193-residue stretch at Phe-47–Cys-239 folds into the FAD-binding PCMH-type domain.

This sequence belongs to the FAD-binding oxidoreductase/transferase type 4 family. FAD serves as cofactor.

It is found in the endoplasmic reticulum membrane. Its subcellular location is the golgi apparatus membrane. The catalysed reaction is cholesterol + NADP(+) = desmosterol + NADPH + H(+). It catalyses the reaction lanosterol + NADPH + H(+) = 24,25-dihydrolanosterol + NADP(+). The enzyme catalyses 5alpha-cholest-8-en-3beta-ol + NADP(+) = zymosterol + NADPH + H(+). The protein operates within steroid biosynthesis; cholesterol biosynthesis. Its function is as follows. Catalyzes the reduction of the delta-24 double bond of sterol intermediates during cholesterol biosynthesis. The protein is Delta(24)-sterol reductase homolog dhcr-24 of Caenorhabditis elegans.